Reading from the N-terminus, the 332-residue chain is MPATAGRVRMPANNRVHSSAALQTHGIWQSAIGYDPYAPTSKEEPKTTQQKTEDPENSYASFQGLLALARITGSNNDEARGSCKKCGRVGHLTFQCRNFLSTKEDKEKDPGAIEAAVLSGLEKIRRGVGKGEVEEVSSEEEEESESSDSDVDSEMERIIAERFGKKKGGSSVKKTSSVRKKKKRVSDESDSDSDSGDRKRRRRSMKKRSSHKRRSLSESEDEEEGRSKRRKERRGRKRDEDDSDESEDEDDRRVKRKSRKEKRRRRSRRNHSDDSDSESSEDDRRQKRRNKVAASSDSEANVSGDDVSRVGRGSSKRSEKKSRKRHHRKERE.

The interval G33 to Y59 is disordered. Over residues S41–D54 the composition is skewed to basic and acidic residues. A CCHC-type zinc finger spans residues G81 to N98. A compositionally biased stretch (basic and acidic residues) spans I124–V133. Positions I124–E332 are disordered. The span at E134–S153 shows a compositional bias: acidic residues. Over residues E154–F163 the composition is skewed to basic and acidic residues. Composition is skewed to basic residues over residues R198–R214 and S227–R236. Over residues D241–D250 the composition is skewed to acidic residues. Composition is skewed to basic residues over residues V254–R269 and S314–E332.

As to quaternary structure, interacts with CAX1. As to expression, expressed in leaves, stems and roots, and at lower levels in flowers.

The protein localises to the nucleus. Its function is as follows. May regulate CAX1 cation transporter. The protein is CAX-interacting protein 4 (CXIP4) of Arabidopsis thaliana (Mouse-ear cress).